A 481-amino-acid polypeptide reads, in one-letter code: Glutamyl-tRNA(Gln) amidotransferase subunit A (481 aa).

Residues Lys-78 and Ser-153 each act as charge relay system in the active site. The Acyl-ester intermediate role is filled by Ser-177.

It belongs to the amidase family. GatA subfamily. Heterotrimer of A, B and C subunits.

The enzyme catalyses L-glutamyl-tRNA(Gln) + L-glutamine + ATP + H2O = L-glutaminyl-tRNA(Gln) + L-glutamate + ADP + phosphate + H(+). In terms of biological role, allows the formation of correctly charged Gln-tRNA(Gln) through the transamidation of misacylated Glu-tRNA(Gln) in organisms which lack glutaminyl-tRNA synthetase. The reaction takes place in the presence of glutamine and ATP through an activated gamma-phospho-Glu-tRNA(Gln). This is Glutamyl-tRNA(Gln) amidotransferase subunit A from Borrelia garinii subsp. bavariensis (strain ATCC BAA-2496 / DSM 23469 / PBi) (Borreliella bavariensis).